We begin with the raw amino-acid sequence, 521 residues long: GMP synthase [glutamine-hydrolyzing] (521 aa).

Residues 8 to 203 (KILILDFGAQ…VVDICGCQTL (196 aa)) form the Glutamine amidotransferase type-1 domain. Cys85 functions as the Nucleophile in the catalytic mechanism. Residues His177 and Glu179 contribute to the active site. The GMPS ATP-PPase domain maps to 204–396 (WTAANIIDDQ…LGLPRTMVYR (193 aa)). 231–237 (SGGVDSS) is a binding site for ATP.

Homodimer.

The enzyme catalyses XMP + L-glutamine + ATP + H2O = GMP + L-glutamate + AMP + diphosphate + 2 H(+). The protein operates within purine metabolism; GMP biosynthesis; GMP from XMP (L-Gln route): step 1/1. In terms of biological role, catalyzes the synthesis of GMP from XMP. The protein is GMP synthase [glutamine-hydrolyzing] of Xanthomonas oryzae pv. oryzae (strain MAFF 311018).